Here is a 114-residue protein sequence, read N- to C-terminus: Iron-sulfur cluster insertion protein ErpA (114 aa).

Residues Cys-42, Cys-106, and Cys-108 each coordinate iron-sulfur cluster.

The protein belongs to the HesB/IscA family. In terms of assembly, homodimer. Iron-sulfur cluster is required as a cofactor.

Functionally, required for insertion of 4Fe-4S clusters for at least IspG. The sequence is that of Iron-sulfur cluster insertion protein ErpA from Citrobacter koseri (strain ATCC BAA-895 / CDC 4225-83 / SGSC4696).